Here is a 462-residue protein sequence, read N- to C-terminus: tRNA modification GTPase MnmE (462 aa).

Arg27, Glu89, and Arg128 together coordinate (6S)-5-formyl-5,6,7,8-tetrahydrofolate. Positions 224–383 (GLATAIVGRP…LDERIAKLFF (160 aa)) constitute a TrmE-type G domain. Residue Asn234 participates in K(+) binding. Residues 234–239 (NVGKSS), 253–259 (TDVAGTT), and 278–281 (DTAG) contribute to the GTP site. Ser238 lines the Mg(2+) pocket. Thr253, Val255, and Thr258 together coordinate K(+). Thr259 is a binding site for Mg(2+). (6S)-5-formyl-5,6,7,8-tetrahydrofolate is bound at residue Lys462.

The protein belongs to the TRAFAC class TrmE-Era-EngA-EngB-Septin-like GTPase superfamily. TrmE GTPase family. As to quaternary structure, homodimer. Heterotetramer of two MnmE and two MnmG subunits. It depends on K(+) as a cofactor.

The protein resides in the cytoplasm. Exhibits a very high intrinsic GTPase hydrolysis rate. Involved in the addition of a carboxymethylaminomethyl (cmnm) group at the wobble position (U34) of certain tRNAs, forming tRNA-cmnm(5)s(2)U34. This chain is tRNA modification GTPase MnmE, found in Lacticaseibacillus paracasei (strain ATCC 334 / BCRC 17002 / CCUG 31169 / CIP 107868 / KCTC 3260 / NRRL B-441) (Lactobacillus paracasei).